Here is a 192-residue protein sequence, read N- to C-terminus: 7-methyl-GTP pyrophosphatase (192 aa).

The active-site Proton acceptor is the Asp69.

Belongs to the Maf family. YceF subfamily. Requires a divalent metal cation as cofactor.

Its subcellular location is the cytoplasm. The enzyme catalyses N(7)-methyl-GTP + H2O = N(7)-methyl-GMP + diphosphate + H(+). Its function is as follows. Nucleoside triphosphate pyrophosphatase that hydrolyzes 7-methyl-GTP (m(7)GTP). May have a dual role in cell division arrest and in preventing the incorporation of modified nucleotides into cellular nucleic acids. In Pseudomonas fluorescens (strain Pf0-1), this protein is 7-methyl-GTP pyrophosphatase.